We begin with the raw amino-acid sequence, 381 residues long: Putative MgpC-like protein MPN_503 (381 aa).

Residues 1 to 109 (MNGVAQDKVH…TDSQQSGHNS (109 aa)) form a disordered region. The span at 13–31 (EQTTQWNQQASQKNLTNNP) shows a compositional bias: polar residues. 2 stretches are compositionally biased toward basic and acidic residues: residues 40–51 (KLDKGRAYRKLN) and 61–73 (DSTK…DKDG). Positions 89–109 (VSSTESQMAAVTDSQQSGHNS) are enriched in polar residues.

The protein belongs to the MgpC family.

This is Putative MgpC-like protein MPN_503 from Mycoplasma pneumoniae (strain ATCC 29342 / M129 / Subtype 1) (Mycoplasmoides pneumoniae).